Here is a 101-residue protein sequence, read N- to C-terminus: Large ribosomal subunit protein uL24 (101 aa).

Belongs to the universal ribosomal protein uL24 family. In terms of assembly, part of the 50S ribosomal subunit.

In terms of biological role, one of two assembly initiator proteins, it binds directly to the 5'-end of the 23S rRNA, where it nucleates assembly of the 50S subunit. Functionally, one of the proteins that surrounds the polypeptide exit tunnel on the outside of the subunit. The polypeptide is Large ribosomal subunit protein uL24 (Streptococcus uberis (strain ATCC BAA-854 / 0140J)).